The sequence spans 151 residues: Transcriptional regulator MraZ (151 aa).

2 SpoVT-AbrB domains span residues 5-52 (ATAV…PLDE) and 81-124 (ATEC…SDVE).

Belongs to the MraZ family. As to quaternary structure, forms oligomers.

It is found in the cytoplasm. The protein resides in the nucleoid. The polypeptide is Transcriptional regulator MraZ (Haemophilus influenzae (strain 86-028NP)).